Here is a 177-residue protein sequence, read N- to C-terminus: Thymidine kinase (177 aa).

G11–S18 is an ATP binding site. E83 acts as the Proton acceptor in catalysis. F113 serves as a coordination point for substrate. Residues C138 and C141 each coordinate Zn(2+). Residue I157 to G161 coordinates substrate. 2 residues coordinate Zn(2+): C170 and C173.

This sequence belongs to the thymidine kinase family. Homotetramer. Two molecules of substrate bind to each enzyme tetramer.

The catalysed reaction is thymidine + ATP = dTMP + ADP + H(+). Functionally, phosphorylates thymidine and thymidine analogs, such as azidothymidine (AZT). Part of the salvage pathway for pyrimidine deoxyribonucleotide synthesis. This chain is Thymidine kinase (OPG101), found in Vaccinia virus (strain Tian Tan) (VACV).